Here is a 365-residue protein sequence, read N- to C-terminus: 2-aminoethylphosphonate--pyruvate transaminase (365 aa).

Lysine 194 carries the post-translational modification N6-(pyridoxal phosphate)lysine.

Belongs to the class-V pyridoxal-phosphate-dependent aminotransferase family. PhnW subfamily. Homodimer. The cofactor is pyridoxal 5'-phosphate.

The catalysed reaction is (2-aminoethyl)phosphonate + pyruvate = phosphonoacetaldehyde + L-alanine. In terms of biological role, involved in phosphonate degradation. The protein is 2-aminoethylphosphonate--pyruvate transaminase of Bacillus cereus (strain ATCC 10987 / NRS 248).